The following is a 261-amino-acid chain: tRNA pseudouridine synthase A (261 aa).

Asp51 serves as the catalytic Nucleophile. Tyr109 is a binding site for substrate.

Belongs to the tRNA pseudouridine synthase TruA family. In terms of assembly, homodimer.

It carries out the reaction uridine(38/39/40) in tRNA = pseudouridine(38/39/40) in tRNA. Functionally, formation of pseudouridine at positions 38, 39 and 40 in the anticodon stem and loop of transfer RNAs. This Shewanella woodyi (strain ATCC 51908 / MS32) protein is tRNA pseudouridine synthase A.